Here is a 1048-residue protein sequence, read N- to C-terminus: B3 domain-containing protein Os02g0598200 (1048 aa).

Positions 1–345 are disordered; that stretch reads MDGAVRGQGC…QKERVASSDN (345 aa). Over residues 16 to 25 the composition is skewed to basic residues; that stretch reads SFNKTKKKNR. Composition is skewed to basic and acidic residues over residues 26–134, 151–162, 169–214, 243–253, 281–295, and 332–345; these read NCSD…SDDM, KKNSRNDADEEK, CSDD…GDKK, KNMKSDGDSYK, AKER…MEMK, and LKRE…SSDN. The TF-B3 1 DNA-binding region spans 375-468; that stretch reads AFAFFKFVRD…TFSVRVFGID (94 aa). The disordered stretch occupies residues 505–528; that stretch reads QYQDSEDIHDGPNVSGESPRSKEP. The TF-B3 2 DNA-binding region spans 953 to 1048; sequence LQFCIPSTIQ…LAFQVYITRK (96 aa).

The protein localises to the nucleus. The protein is B3 domain-containing protein Os02g0598200 of Oryza sativa subsp. japonica (Rice).